The chain runs to 158 residues: NAD(P)H-quinone oxidoreductase subunit J, chloroplastic (158 aa).

Belongs to the complex I 30 kDa subunit family. As to quaternary structure, NDH is composed of at least 16 different subunits, 5 of which are encoded in the nucleus.

It localises to the plastid. Its subcellular location is the chloroplast thylakoid membrane. The catalysed reaction is a plastoquinone + NADH + (n+1) H(+)(in) = a plastoquinol + NAD(+) + n H(+)(out). The enzyme catalyses a plastoquinone + NADPH + (n+1) H(+)(in) = a plastoquinol + NADP(+) + n H(+)(out). NDH shuttles electrons from NAD(P)H:plastoquinone, via FMN and iron-sulfur (Fe-S) centers, to quinones in the photosynthetic chain and possibly in a chloroplast respiratory chain. The immediate electron acceptor for the enzyme in this species is believed to be plastoquinone. Couples the redox reaction to proton translocation, and thus conserves the redox energy in a proton gradient. This chain is NAD(P)H-quinone oxidoreductase subunit J, chloroplastic, found in Solanum bulbocastanum (Wild potato).